The primary structure comprises 196 residues: ATP-dependent Clp protease proteolytic subunit (196 aa).

The active-site Nucleophile is S101. H126 is an active-site residue.

The protein belongs to the peptidase S14 family. As to quaternary structure, component of the chloroplastic Clp protease core complex.

The protein localises to the plastid. It is found in the chloroplast stroma. The catalysed reaction is Hydrolysis of proteins to small peptides in the presence of ATP and magnesium. alpha-casein is the usual test substrate. In the absence of ATP, only oligopeptides shorter than five residues are hydrolyzed (such as succinyl-Leu-Tyr-|-NHMec, and Leu-Tyr-Leu-|-Tyr-Trp, in which cleavage of the -Tyr-|-Leu- and -Tyr-|-Trp bonds also occurs).. Its function is as follows. Cleaves peptides in various proteins in a process that requires ATP hydrolysis. Has a chymotrypsin-like activity. Plays a major role in the degradation of misfolded proteins. The chain is ATP-dependent Clp protease proteolytic subunit from Lepidium virginicum (Virginia pepperweed).